The following is a 177-amino-acid chain: Large ribosomal subunit protein uL6 (177 aa).

This sequence belongs to the universal ribosomal protein uL6 family. In terms of assembly, part of the 50S ribosomal subunit.

This protein binds to the 23S rRNA, and is important in its secondary structure. It is located near the subunit interface in the base of the L7/L12 stalk, and near the tRNA binding site of the peptidyltransferase center. This Cereibacter sphaeroides (strain ATCC 17029 / ATH 2.4.9) (Rhodobacter sphaeroides) protein is Large ribosomal subunit protein uL6.